Reading from the N-terminus, the 861-residue chain is Probable linoleate 9S-lipoxygenase 8 (861 aa).

Residues Phe-33 to Ala-160 enclose the PLAT domain. The Lipoxygenase domain maps to Pro-163–Ile-861. Residues Thr-220–Lys-245 form a disordered region. Positions 522, 527, 713, 717, and 861 each coordinate Fe cation.

This sequence belongs to the lipoxygenase family. As to quaternary structure, monomer. Fe cation is required as a cofactor.

It is found in the cytoplasm. It carries out the reaction (9Z,12Z)-octadecadienoate + O2 = (9S)-hydroperoxy-(10E,12Z)-octadecadienoate. Its pathway is lipid metabolism; oxylipin biosynthesis. In terms of biological role, plant lipoxygenases may be involved in a number of diverse aspects of plant physiology including growth and development, pest resistance, and senescence or responses to wounding. Catalyzes the hydroperoxidation of lipids containing a cis,cis-1,4-pentadiene structure. This Solanum tuberosum (Potato) protein is Probable linoleate 9S-lipoxygenase 8 (LOX1.8).